The primary structure comprises 253 residues: Snake venom serine proteinase 14 (253 aa).

The signal sequence occupies residues 1–18; the sequence is MVLIRVLANLLILQLSYA. Residues 19 to 24 constitute a propeptide that is removed on maturation; it reads QKSSEL. Residues 25-244 enclose the Peptidase S1 domain; that stretch reads VIGGDECNIN…YTDWIQSIIA (220 aa). Disulfide bonds link cysteine 31–cysteine 158, cysteine 49–cysteine 65, cysteine 93–cysteine 251, cysteine 137–cysteine 205, cysteine 169–cysteine 184, and cysteine 195–cysteine 220. Active-site charge relay system residues include histidine 64 and aspartate 105. N-linked (GlcNAc...) asparagine glycosylation is found at asparagine 116, asparagine 117, and asparagine 149. The Charge relay system role is filled by serine 199.

It belongs to the peptidase S1 family. Snake venom subfamily. As to quaternary structure, monomer. As to expression, expressed by the venom gland.

The protein resides in the secreted. Snake venom serine protease that may act in the hemostasis system of the prey. In Crotalus adamanteus (Eastern diamondback rattlesnake), this protein is Snake venom serine proteinase 14.